The sequence spans 523 residues: Bifunctional purine biosynthesis protein PurH (523 aa).

The MGS-like domain occupies 1-150 (MSDVVPVRNA…KNHGDVAIAT (150 aa)).

This sequence belongs to the PurH family.

It carries out the reaction (6R)-10-formyltetrahydrofolate + 5-amino-1-(5-phospho-beta-D-ribosyl)imidazole-4-carboxamide = 5-formamido-1-(5-phospho-D-ribosyl)imidazole-4-carboxamide + (6S)-5,6,7,8-tetrahydrofolate. The catalysed reaction is IMP + H2O = 5-formamido-1-(5-phospho-D-ribosyl)imidazole-4-carboxamide. It participates in purine metabolism; IMP biosynthesis via de novo pathway; 5-formamido-1-(5-phospho-D-ribosyl)imidazole-4-carboxamide from 5-amino-1-(5-phospho-D-ribosyl)imidazole-4-carboxamide (10-formyl THF route): step 1/1. Its pathway is purine metabolism; IMP biosynthesis via de novo pathway; IMP from 5-formamido-1-(5-phospho-D-ribosyl)imidazole-4-carboxamide: step 1/1. The polypeptide is Bifunctional purine biosynthesis protein PurH (Rhodopirellula baltica (strain DSM 10527 / NCIMB 13988 / SH1)).